The following is a 508-amino-acid chain: Cell division protein FtsZ (508 aa).

Residues 24 to 28, 111 to 113, glutamate 142, arginine 146, and aspartate 190 contribute to the GTP site; these read GAGGN and GTG. Disordered regions lie at residues 342 to 389 and 428 to 508; these read IAET…SAPQ and VAEE…RLAN. A compositionally biased stretch (low complexity) spans 464–482; it reads QQASAPQAQARSAQSARPQ.

Belongs to the FtsZ family. In terms of assembly, homodimer. Polymerizes to form a dynamic ring structure in a strictly GTP-dependent manner. Interacts directly with several other division proteins.

It localises to the cytoplasm. Its function is as follows. Essential cell division protein that forms a contractile ring structure (Z ring) at the future cell division site. The regulation of the ring assembly controls the timing and the location of cell division. One of the functions of the FtsZ ring is to recruit other cell division proteins to the septum to produce a new cell wall between the dividing cells. Binds GTP and shows GTPase activity. This chain is Cell division protein FtsZ, found in Caulobacter vibrioides (strain ATCC 19089 / CIP 103742 / CB 15) (Caulobacter crescentus).